The sequence spans 154 residues: 6,7-dimethyl-8-ribityllumazine synthase (154 aa).

5-amino-6-(D-ribitylamino)uracil is bound by residues phenylalanine 22, 56-58, and 80-82; these read AFE and AVI. Residue 85–86 participates in (2S)-2-hydroxy-3-oxobutyl phosphate binding; the sequence is ST. Histidine 88 functions as the Proton donor in the catalytic mechanism. Phenylalanine 113 is a 5-amino-6-(D-ribitylamino)uracil binding site. Residue arginine 127 participates in (2S)-2-hydroxy-3-oxobutyl phosphate binding.

This sequence belongs to the DMRL synthase family.

It catalyses the reaction (2S)-2-hydroxy-3-oxobutyl phosphate + 5-amino-6-(D-ribitylamino)uracil = 6,7-dimethyl-8-(1-D-ribityl)lumazine + phosphate + 2 H2O + H(+). It functions in the pathway cofactor biosynthesis; riboflavin biosynthesis; riboflavin from 2-hydroxy-3-oxobutyl phosphate and 5-amino-6-(D-ribitylamino)uracil: step 1/2. In terms of biological role, catalyzes the formation of 6,7-dimethyl-8-ribityllumazine by condensation of 5-amino-6-(D-ribitylamino)uracil with 3,4-dihydroxy-2-butanone 4-phosphate. This is the penultimate step in the biosynthesis of riboflavin. This chain is 6,7-dimethyl-8-ribityllumazine synthase, found in Clostridium beijerinckii (strain ATCC 51743 / NCIMB 8052) (Clostridium acetobutylicum).